The following is a 243-amino-acid chain: Probable ubiquitin-conjugating enzyme E2 33 (243 aa).

The 158-residue stretch at Ala-5–Gln-162 folds into the UBC core domain. Cys-87 acts as the Glycyl thioester intermediate in catalysis. Residues Glu-168–Val-197 are disordered. Positions Pro-184–Val-197 are enriched in basic and acidic residues. The chain crosses the membrane as a helical span at residues Leu-220–Leu-240.

Belongs to the ubiquitin-conjugating enzyme family.

The protein localises to the membrane. The catalysed reaction is S-ubiquitinyl-[E1 ubiquitin-activating enzyme]-L-cysteine + [E2 ubiquitin-conjugating enzyme]-L-cysteine = [E1 ubiquitin-activating enzyme]-L-cysteine + S-ubiquitinyl-[E2 ubiquitin-conjugating enzyme]-L-cysteine.. Its pathway is protein modification; protein ubiquitination. Accepts the ubiquitin from the E1 complex and catalyzes its covalent attachment to other proteins. The protein is Probable ubiquitin-conjugating enzyme E2 33 (UBC33) of Arabidopsis thaliana (Mouse-ear cress).